We begin with the raw amino-acid sequence, 267 residues long: Tryptophan synthase alpha chain (267 aa).

Residues Glu-49 and Asp-60 each act as proton acceptor in the active site.

Belongs to the TrpA family. Tetramer of two alpha and two beta chains.

It carries out the reaction (1S,2R)-1-C-(indol-3-yl)glycerol 3-phosphate + L-serine = D-glyceraldehyde 3-phosphate + L-tryptophan + H2O. Its pathway is amino-acid biosynthesis; L-tryptophan biosynthesis; L-tryptophan from chorismate: step 5/5. In terms of biological role, the alpha subunit is responsible for the aldol cleavage of indoleglycerol phosphate to indole and glyceraldehyde 3-phosphate. The chain is Tryptophan synthase alpha chain from Methylococcus capsulatus (strain ATCC 33009 / NCIMB 11132 / Bath).